The primary structure comprises 364 residues: MAHNLLNDTFLRALLREPTDYTPIWLMRQAGRYLPEYNATRARAGSFLGLAKNPDYATEVTLQPLERFPLDAAILFSDILTIPDAMGLGLDFQVGEGPKFAHPVRTEADVAKLAVPDIEATLGYVTGAVREIRRALTDAQGRQRVPLIGFSGSPWTLACYMVEGGGSDDFRTVKSMAYSRPDLMHRILDVNAQAVAAYLNAQIEAGAQAVMIFDTWGGALADGAYQRFSLDYIRRVVSQLKREHDGERVPVITFTKGGGLWLEEIAATGVDAVGLDWTVNLGAARERVAGRVALQGNLDPTILFAPPAAVREQARAVLDSYGNHPGHVFNLGHGISQFTSPDHVAELVDEVHTHSRAIRSGAAG.

Residues 28–32, D78, Y160, T215, and H333 contribute to the substrate site; that span reads RQAGR.

The protein belongs to the uroporphyrinogen decarboxylase family. In terms of assembly, homodimer.

The protein localises to the cytoplasm. It carries out the reaction uroporphyrinogen III + 4 H(+) = coproporphyrinogen III + 4 CO2. It functions in the pathway porphyrin-containing compound metabolism; protoporphyrin-IX biosynthesis; coproporphyrinogen-III from 5-aminolevulinate: step 4/4. Its function is as follows. Catalyzes the decarboxylation of four acetate groups of uroporphyrinogen-III to yield coproporphyrinogen-III. The chain is Uroporphyrinogen decarboxylase from Burkholderia cenocepacia (strain ATCC BAA-245 / DSM 16553 / LMG 16656 / NCTC 13227 / J2315 / CF5610) (Burkholderia cepacia (strain J2315)).